The following is a 595-amino-acid chain: Indole-3-acetic acid-amido synthetase GH3.3 (595 aa).

Belongs to the IAA-amido conjugating enzyme family.

Functionally, catalyzes the synthesis of indole-3-acetic acid (IAA)-amino acid conjugates, providing a mechanism for the plant to cope with the presence of excess auxin. Strongly reactive with Glu, Gln, Trp, Asp, Ala, Leu, Phe, Gly, Tyr, Met, Ile and Val. Little or no product formation with His, Ser, Thr, Arg, Lys, or Cys. Also active on pyruvic and butyric acid analogs of IAA, PAA and the synthetic auxin naphthaleneacetic acid (NAA). The two chlorinated synthetic auxin herbicides 2,4-D and 3,6-dichloro-o-anisic acid (dicamba) cannot be used as substrates. The polypeptide is Indole-3-acetic acid-amido synthetase GH3.3 (GH3.3) (Arabidopsis thaliana (Mouse-ear cress)).